The sequence spans 494 residues: Alpha-amylase-related protein (494 aa).

Residues 1 to 20 (MIKFALALTLCLAGASLSLA) form the signal peptide. A Pyrrolidone carboxylic acid modification is found at glutamine 21. A disulfide bond links cysteine 48 and cysteine 104. Ca(2+) is bound by residues asparagine 118, glutamine 169, and aspartate 178. Cysteine 157 and cysteine 171 are oxidised to a cystine. A chloride-binding site is contributed by arginine 206. Aspartate 208 (nucleophile) is an active-site residue. Histidine 212 is a binding site for Ca(2+). The Proton donor role is filled by glutamate 245. Chloride-binding residues include asparagine 308 and arginine 343. 3 cysteine pairs are disulfide-bonded: cysteine 376-cysteine 382, cysteine 418-cysteine 441, and cysteine 448-cysteine 460.

It belongs to the glycosyl hydrolase 13 family. In terms of assembly, monomer. The cofactor is Ca(2+). Chloride is required as a cofactor.

It is found in the secreted. It catalyses the reaction Endohydrolysis of (1-&gt;4)-alpha-D-glucosidic linkages in polysaccharides containing three or more (1-&gt;4)-alpha-linked D-glucose units.. This Drosophila serrata (Fruit fly) protein is Alpha-amylase-related protein (Amyrel).